Consider the following 506-residue polypeptide: Protein MGF 505-9R (506 aa).

Belongs to the asfivirus MGF 505 family.

Its function is as follows. Plays a role in virus cell tropism, and may be required for efficient virus replication in macrophages. The protein is Protein MGF 505-9R of Ornithodoros (relapsing fever ticks).